Here is a 377-residue protein sequence, read N- to C-terminus: RING finger protein 215 (377 aa).

Residues 1-22 (MGPAARPALRSPPPPPPPPPSP) are Cytoplasmic-facing. A disordered region spans residues 1–22 (MGPAARPALRSPPPPPPPPPSP). Residues 10–22 (RSPPPPPPPPPSP) show a composition bias toward pro residues. Residues 23 to 43 (LLLLLPLLPLWLGLAGPGAAA) traverse the membrane as a helical segment. At 44–250 (DGSEPAAGAG…GGSRAQEQKP (207 aa)) the chain is on the extracellular side. Asn-186 carries an N-linked (GlcNAc...) asparagine glycan. Residues 251 to 271 (LQQLWNAILLVAMLLCTGLVV) form a helical membrane-spanning segment. The Cytoplasmic portion of the chain corresponds to 272–377 (QAQRQASRQS…NVLGNRYSDD (106 aa)). The RING-type; atypical zinc-finger motif lies at 325–366 (CAVCLDYFCNKQWLRVLPCKHEFHRDCVDPWLMLQQTCPLCK).

Its subcellular location is the membrane. This is RING finger protein 215 (RNF215) from Homo sapiens (Human).